A 234-amino-acid polypeptide reads, in one-letter code: Large ribosomal subunit protein uL1 (234 aa).

The protein belongs to the universal ribosomal protein uL1 family. Part of the 50S ribosomal subunit.

In terms of biological role, binds directly to 23S rRNA. The L1 stalk is quite mobile in the ribosome, and is involved in E site tRNA release. Functionally, protein L1 is also a translational repressor protein, it controls the translation of the L11 operon by binding to its mRNA. This is Large ribosomal subunit protein uL1 from Edwardsiella ictaluri (strain 93-146).